We begin with the raw amino-acid sequence, 413 residues long: Probable tRNA sulfurtransferase (413 aa).

In terms of domain architecture, THUMP spans 61–171 (TRVLDRVTRV…EDGTYIFTEK (111 aa)). Residues 189-190 (ML), 214-215 (HF), arginine 275, glycine 297, and glutamine 306 contribute to the ATP site.

It belongs to the ThiI family.

It localises to the cytoplasm. The enzyme catalyses [ThiI sulfur-carrier protein]-S-sulfanyl-L-cysteine + a uridine in tRNA + 2 reduced [2Fe-2S]-[ferredoxin] + ATP + H(+) = [ThiI sulfur-carrier protein]-L-cysteine + a 4-thiouridine in tRNA + 2 oxidized [2Fe-2S]-[ferredoxin] + AMP + diphosphate. It carries out the reaction [ThiS sulfur-carrier protein]-C-terminal Gly-Gly-AMP + S-sulfanyl-L-cysteinyl-[cysteine desulfurase] + AH2 = [ThiS sulfur-carrier protein]-C-terminal-Gly-aminoethanethioate + L-cysteinyl-[cysteine desulfurase] + A + AMP + 2 H(+). It participates in cofactor biosynthesis; thiamine diphosphate biosynthesis. Its function is as follows. Catalyzes the ATP-dependent transfer of a sulfur to tRNA to produce 4-thiouridine in position 8 of tRNAs, which functions as a near-UV photosensor. Also catalyzes the transfer of sulfur to the sulfur carrier protein ThiS, forming ThiS-thiocarboxylate. This is a step in the synthesis of thiazole, in the thiamine biosynthesis pathway. The sulfur is donated as persulfide by IscS. The sequence is that of Probable tRNA sulfurtransferase from Natranaerobius thermophilus (strain ATCC BAA-1301 / DSM 18059 / JW/NM-WN-LF).